Consider the following 101-residue polypeptide: Small ribosomal subunit protein uS14 (101 aa).

It belongs to the universal ribosomal protein uS14 family. As to quaternary structure, part of the 30S ribosomal subunit. Contacts proteins S3 and S10.

In terms of biological role, binds 16S rRNA, required for the assembly of 30S particles and may also be responsible for determining the conformation of the 16S rRNA at the A site. The polypeptide is Small ribosomal subunit protein uS14 (Caulobacter sp. (strain K31)).